The sequence spans 344 residues: Uroporphyrinogen decarboxylase (344 aa).

Substrate-binding positions include 24–28 (RQAGR), Phe43, Asp74, Tyr149, Ser204, and His319.

It belongs to the uroporphyrinogen decarboxylase family. In terms of assembly, homodimer.

It is found in the cytoplasm. The catalysed reaction is uroporphyrinogen III + 4 H(+) = coproporphyrinogen III + 4 CO2. It participates in porphyrin-containing compound metabolism; protoporphyrin-IX biosynthesis; coproporphyrinogen-III from 5-aminolevulinate: step 4/4. Its function is as follows. Catalyzes the decarboxylation of four acetate groups of uroporphyrinogen-III to yield coproporphyrinogen-III. The protein is Uroporphyrinogen decarboxylase of Agrobacterium fabrum (strain C58 / ATCC 33970) (Agrobacterium tumefaciens (strain C58)).